We begin with the raw amino-acid sequence, 173 residues long: Translation initiation factor IF-3 (173 aa).

This sequence belongs to the IF-3 family. As to quaternary structure, monomer.

Its subcellular location is the cytoplasm. Functionally, IF-3 binds to the 30S ribosomal subunit and shifts the equilibrium between 70S ribosomes and their 50S and 30S subunits in favor of the free subunits, thus enhancing the availability of 30S subunits on which protein synthesis initiation begins. In Methylobacterium radiotolerans (strain ATCC 27329 / DSM 1819 / JCM 2831 / NBRC 15690 / NCIMB 10815 / 0-1), this protein is Translation initiation factor IF-3.